A 206-amino-acid polypeptide reads, in one-letter code: Pro-glucagon (206 aa).

A signal peptide spans 1 to 22; that stretch reads MKMKSIYFIAGLLLMIVQGSWQ. A disordered region spans residues 27–57; the sequence is DTEEKSRSFKASQSEPLDESRQLNEVKRHSQ. Basic and acidic residues predominate over residues 44 to 54; the sequence is DESRQLNEVKR. A propeptide spanning residues 86-109 is cleaved from the precursor; the sequence is NGQQGQEDKENDKFPDQLSSNAIS. Residue arginine 147 is modified to Arginine amide. 2 propeptides span residues 151–163 and 199–206; these read DFPE…EEMG and RDLLGEYQ.

This sequence belongs to the glucagon family. Post-translationally, proglucagon is post-translationally processed in a tissue-specific manner in pancreatic A cells and intestinal L cells. In pancreatic A cells, the major bioactive hormone is glucagon cleaved by PCSK2/PC2. In the intestinal L cells PCSK1/PC1 liberates GLP-1 and GLP-2. GLP-1 is further N-terminally truncated by post-translational processing in the intestinal L cells resulting in GLP-1(7-37) GLP-1-(7-36)amide.

It localises to the secreted. Functionally, plays a key role in glucose metabolism and homeostasis. Regulates blood glucose by increasing gluconeogenesis and decreasing glycolysis. Its function is as follows. Potent stimulator of glucose-dependent insulin release. Plays important roles on gastric motility and the suppression of plasma glucagon levels. May be involved in the suppression of satiety and stimulation of glucose disposal in peripheral tissues, independent of the actions of insulin. Has growth-promoting activities on intestinal epithelium. May also regulate the hypothalamic pituitary axis (HPA) via effects on LH, TSH, CRH, oxytocin, and vasopressin secretion. Increases islet mass through stimulation of islet neogenesis and pancreatic beta cell proliferation. Stimulates intestinal growth and up-regulates villus height in the small intestine, concomitant with increased crypt cell proliferation and decreased enterocyte apoptosis. The gastrointestinal tract, from the stomach to the colon is the principal target for GLP-2 action. Plays a key role in nutrient homeostasis, enhancing nutrient assimilation through enhanced gastrointestinal function, as well as increasing nutrient disposal. Stimulates intestinal glucose transport and decreases mucosal permeability. The sequence is that of Pro-glucagon (GCG) from Gallus gallus (Chicken).